Reading from the N-terminus, the 284-residue chain is Bifunctional protein FolD (284 aa).

Residues 165 to 167 (GRS) and S190 contribute to the NADP(+) site.

The protein belongs to the tetrahydrofolate dehydrogenase/cyclohydrolase family. In terms of assembly, homodimer.

It catalyses the reaction (6R)-5,10-methylene-5,6,7,8-tetrahydrofolate + NADP(+) = (6R)-5,10-methenyltetrahydrofolate + NADPH. The enzyme catalyses (6R)-5,10-methenyltetrahydrofolate + H2O = (6R)-10-formyltetrahydrofolate + H(+). It participates in one-carbon metabolism; tetrahydrofolate interconversion. Catalyzes the oxidation of 5,10-methylenetetrahydrofolate to 5,10-methenyltetrahydrofolate and then the hydrolysis of 5,10-methenyltetrahydrofolate to 10-formyltetrahydrofolate. This Streptococcus gordonii (strain Challis / ATCC 35105 / BCRC 15272 / CH1 / DL1 / V288) protein is Bifunctional protein FolD.